A 131-amino-acid chain; its full sequence is Histone H2A type 1-A (131 aa).

Residues 1–23 are disordered; that stretch reads MSGRGKQGGKARAKSKSRSSRAG. At S2 the chain carries N-acetylserine. A Phosphoserine; by RPS6KA5 modification is found at S2. At R4 the chain carries Citrulline; alternate. Position 4 is a symmetric dimethylarginine; by PRMT5; alternate (R4). K6 carries the N6-(2-hydroxyisobutyryl)lysine modification. Positions 7 to 19 are enriched in basic residues; it reads QGGKARAKSKSRS. An N6-(2-hydroxyisobutyryl)lysine; alternate modification is found at K10. At K10 the chain carries N6-(beta-hydroxybutyryl)lysine; alternate. K10 bears the N6-lactoyllysine; alternate mark. Residue K10 is modified to N6-succinyllysine; alternate. Position 14 is an N6-(beta-hydroxybutyryl)lysine (K14). Glycyl lysine isopeptide (Lys-Gly) (interchain with G-Cter in ubiquitin) cross-links involve residues K14 and K16. K37 bears the N6-(2-hydroxyisobutyryl)lysine; alternate mark. The residue at position 37 (K37) is an N6-(beta-hydroxybutyryl)lysine; alternate. Residue K37 is modified to N6-crotonyllysine; alternate. K75 and K76 each carry N6-(2-hydroxyisobutyryl)lysine. N6-(2-hydroxyisobutyryl)lysine; alternate is present on K96. Position 96 is an N6-(beta-hydroxybutyryl)lysine; alternate (K96). K96 is subject to N6-succinyllysine; alternate. Position 96 is an N6-glutaryllysine; alternate (K96). The residue at position 105 (Q105) is an N5-methylglutamine. K119 carries the post-translational modification N6-(2-hydroxyisobutyryl)lysine; alternate. Residue K119 is modified to N6-(beta-hydroxybutyryl)lysine; alternate. Residues K119 and K120 each carry the N6-crotonyllysine; alternate modification. Residues K119 and K120 each carry the N6-glutaryllysine; alternate modification. Residue K120 forms a Glycyl lysine isopeptide (Lys-Gly) (interchain with G-Cter in ubiquitin); alternate linkage. T121 carries the phosphothreonine; by DCAF1 modification. K127 carries the post-translational modification N6-crotonyllysine.

It belongs to the histone H2A family. In terms of assembly, the nucleosome is a histone octamer containing two molecules each of H2A, H2B, H3 and H4 assembled in one H3-H4 heterotetramer and two H2A-H2B heterodimers. The octamer wraps approximately 147 bp of DNA. In terms of processing, deiminated on Arg-4 in granulocytes upon calcium entry. Post-translationally, monoubiquitination of Lys-120 (H2AK119Ub) by RING1, TRIM37 and RNF2/RING2 complex gives a specific tag for epigenetic transcriptional repression and participates in X chromosome inactivation of female mammals. It is involved in the initiation of both imprinted and random X inactivation. Ubiquitinated H2A is enriched in inactive X chromosome chromatin. Ubiquitination of H2A functions downstream of methylation of 'Lys-27' of histone H3 (H3K27me). H2AK119Ub by RNF2/RING2 can also be induced by ultraviolet and may be involved in DNA repair. Monoubiquitination of Lys-120 (H2AK119Ub) by TRIM37 may promote transformation of cells in a number of breast cancers. Following DNA double-strand breaks (DSBs), it is ubiquitinated through 'Lys-63' linkage of ubiquitin moieties by the E2 ligase UBE2N and the E3 ligases RNF8 and RNF168, leading to the recruitment of repair proteins to sites of DNA damage. Ubiquitination at Lys-14 and Lys-16 (H2AK13Ub and H2AK15Ub, respectively) in response to DNA damage is initiated by RNF168 that mediates monoubiquitination at these 2 sites, and 'Lys-63'-linked ubiquitin are then conjugated to monoubiquitin; RNF8 is able to extend 'Lys-63'-linked ubiquitin chains in vitro. Deubiquitinated by USP51 at Lys-14 and Lys-16 (H2AK13Ub and H2AK15Ub, respectively) after damaged DNA is repaired. H2AK119Ub and ionizing radiation-induced 'Lys-63'-linked ubiquitination (H2AK13Ub and H2AK15Ub) are distinct events. Phosphorylation on Ser-2 (H2AS1ph) is enhanced during mitosis. Phosphorylation on Ser-2 by RPS6KA5/MSK1 directly represses transcription. Acetylation of H3 inhibits Ser-2 phosphorylation by RPS6KA5/MSK1. Phosphorylation at Thr-121 (H2AT120ph) by DCAF1 is present in the regulatory region of many tumor suppresor genes and down-regulates their transcription. In terms of processing, glutamine methylation at Gln-105 (H2AQ104me) by FBL is specifically dedicated to polymerase I. It is present at 35S ribosomal DNA locus and impairs binding of the FACT complex. Post-translationally, symmetric dimethylation on Arg-4 by the PRDM1/PRMT5 complex may play a crucial role in the germ-cell lineage. Crotonylation (Kcr) is specifically present in male germ cells and marks testis-specific genes in post-meiotic cells, including X-linked genes that escape sex chromosome inactivation in haploid cells. Crotonylation marks active promoters and enhancers and confers resistance to transcriptional repressors. It is also associated with post-meiotically activated genes on autosomes. In terms of processing, lactylated in macrophages by EP300/P300 by using lactoyl-CoA directly derived from endogenous or exogenous lactate, leading to stimulates gene transcription.

The protein resides in the nucleus. The protein localises to the chromosome. Core component of nucleosome. Nucleosomes wrap and compact DNA into chromatin, limiting DNA accessibility to the cellular machineries which require DNA as a template. Histones thereby play a central role in transcription regulation, DNA repair, DNA replication and chromosomal stability. DNA accessibility is regulated via a complex set of post-translational modifications of histones, also called histone code, and nucleosome remodeling. In Homo sapiens (Human), this protein is Histone H2A type 1-A.